Here is a 130-residue protein sequence, read N- to C-terminus: Small ribosomal subunit protein uS9 (130 aa).

The protein belongs to the universal ribosomal protein uS9 family.

The protein is Small ribosomal subunit protein uS9 of Streptococcus mutans serotype c (strain ATCC 700610 / UA159).